We begin with the raw amino-acid sequence, 805 residues long: Transforming acidic coiled-coil-containing protein 1 (805 aa).

Ala-2 carries the post-translational modification N-acetylalanine. Residue Ala-2 is the site of N-myristoyl glycine attachment. The interaction with LSM7 and SNRPG stretch occupies residues 2-55 (AFSPWQILSPVQWAKWTWSAVRGGAAGEDEAGGPEGDPEEEDSQAETKSLSFSS). Residues Ser-4, Ser-10, and Ser-44 each carry the phosphoserine modification. The segment at 23–140 (RGGAAGEDEA…SVKNFREEPE (118 aa)) is disordered. Acidic residues predominate over residues 28 to 45 (GEDEAGGPEGDPEEEDSQ). Polar residues-rich tracts occupy residues 47–60 (ETKSLSFSSDSEGN) and 111–128 (SKTCSKPSENEVPQQAID). Basic and acidic residues predominate over residues 130–140 (HSVKNFREEPE). A phosphoserine mark is found at Ser-147 and Ser-153. Positions 152 to 259 (FSIETKDSTD…TNAAVEGTPL (108 aa)) are interaction with TDRD7. Positions 206 to 427 (EASAEADLKA…DPDNFDESMD (222 aa)) are interaction with YEATS4. SPAZ domains lie at 215 to 297 (AGNS…TPGT) and 359 to 507 (SKSA…TDEE). Residues 215 to 457 (AGNSCPELVP…VNEILESPKK (243 aa)) form a disordered region. Residues 226 to 241 (RRSKLRKPKPVPLRKK) carry the Bipartite nuclear localization signal 1 motif. Positions 226–242 (RRSKLRKPKPVPLRKKA) are enriched in basic residues. Ser-228 is subject to Phosphoserine; by AURKC. Phosphoserine is present on residues Ser-248 and Ser-276. Polar residues-rich tracts occupy residues 296–305 (GTLSSDTNDS), 377–413 (LSQTSSKPDPSQWESPSFNPFGSHSVLQNSPPLSSEG), and 431–447 (PTTTLTSSDFCSPTGNH). Phosphoserine occurs at positions 381 and 406. The Bipartite nuclear localization signal 2 signature appears at 455–471 (PKKAKSRLITSGCKVKK). Ser-483 carries the post-translational modification Phosphoserine. A disordered region spans residues 493 to 526 (ISDISNRDGHATDEEKLASTSCGQKSAGAEVKGE). Residues 497–509 (SNRDGHATDEEKL) show a composition bias toward basic and acidic residues. Tyr-533 is modified (phosphotyrosine). Residue Ser-591 is modified to Phosphoserine. The stretch at 610 to 805 (IREEIITKEI…ELIAKLGKTD (196 aa)) forms a coiled coil. An interaction with CH-TOG region spans residues 701 to 805 (VLEGFKKNEE…ELIAKLGKTD (105 aa)).

This sequence belongs to the TACC family. Interacts with KIAA0097/CH-TOG and with the oncogenic transcription factor YEATS4. Interacts with AURKA, AURKB and AURKC. Interacts with LSM7, TDRD7 and SNRPG. Interacts with GCN5L2 and PCAF. Interacts with the thyroid hormone receptors THRB and THRA, predominantly with isoform alpha-2. The interaction with THRA isoform alpha-1 and THRB is decreased in the presence of thyroid hormone T3. Also interacts with other nuclear receptors, including ESR1, NR3C1, PPARG, RARA and RXRA, preferentially in the absence of their hormonal ligands. Isoform 1 is heavily phosphorylated; isoform 6 is not. In terms of tissue distribution, isoform 1, isoform 3 and isoform 5 are ubiquitous. Isoform 2 is strongly expressed in the brain, weakly detectable in lung and colon, and overexpressed in gastric cancer. Isoform 4 is not detected in normal tissues, but strong expression was found in gastric cancer tissues. Down-regulated in a subset of cases of breast cancer.

The protein resides in the cytoplasm. It localises to the nucleus. The protein localises to the cytoskeleton. It is found in the microtubule organizing center. Its subcellular location is the centrosome. The protein resides in the midbody. It localises to the membrane. Its function is as follows. Involved in transcription regulation induced by nuclear receptors, including in T3 thyroid hormone and all-trans retinoic acid pathways. Might promote the nuclear localization of the receptors. Likely involved in the processes that promote cell division prior to the formation of differentiated tissues. The sequence is that of Transforming acidic coiled-coil-containing protein 1 (TACC1) from Homo sapiens (Human).